A 316-amino-acid polypeptide reads, in one-letter code: Nucleoside diphosphate-linked moiety X motif 6 (316 aa).

The 133-residue stretch at 141–273 folds into the Nudix hydrolase domain; that stretch reads SHQVGVAGAV…TSRVARLLLY (133 aa). Positions 176–197 match the Nudix box motif; sequence GLSEPEEDIGDTAVREVFEETG.

Belongs to the Nudix hydrolase family. As to quaternary structure, monomer and homodimer. In terms of tissue distribution, detected in liver, kidney and esophagus (at protein level). Ubiquitous.

Its subcellular location is the cytoplasm. The protein resides in the nucleus. It localises to the mitochondrion. Functionally, may contribute to the regulation of cell proliferation. In Homo sapiens (Human), this protein is Nucleoside diphosphate-linked moiety X motif 6 (NUDT6).